A 423-amino-acid polypeptide reads, in one-letter code: Dihydroorotase (423 aa).

Zn(2+) contacts are provided by H60 and H62. Residues 62–64 and N94 each bind substrate; that span reads HFR. Residues D152, H179, H232, and D305 each contribute to the Zn(2+) site. The active site involves D305. Substrate contacts are provided by residues H309 and 323–324; that span reads PG.

The protein belongs to the metallo-dependent hydrolases superfamily. DHOase family. Class I DHOase subfamily. The cofactor is Zn(2+).

The catalysed reaction is (S)-dihydroorotate + H2O = N-carbamoyl-L-aspartate + H(+). The protein operates within pyrimidine metabolism; UMP biosynthesis via de novo pathway; (S)-dihydroorotate from bicarbonate: step 3/3. Catalyzes the reversible cyclization of carbamoyl aspartate to dihydroorotate. The polypeptide is Dihydroorotase (Sulfurihydrogenibium sp. (strain YO3AOP1)).